Here is a 206-residue protein sequence, read N- to C-terminus: FMN-dependent NADH:quinone oxidoreductase (206 aa).

FMN is bound by residues 15–17 (SVS), 94–97 (MYNF), and 138–141 (TRGG).

Belongs to the azoreductase type 1 family. In terms of assembly, homodimer. FMN is required as a cofactor.

The catalysed reaction is 2 a quinone + NADH + H(+) = 2 a 1,4-benzosemiquinone + NAD(+). The enzyme catalyses N,N-dimethyl-1,4-phenylenediamine + anthranilate + 2 NAD(+) = 2-(4-dimethylaminophenyl)diazenylbenzoate + 2 NADH + 2 H(+). Quinone reductase that provides resistance to thiol-specific stress caused by electrophilic quinones. Functionally, also exhibits azoreductase activity. Catalyzes the reductive cleavage of the azo bond in aromatic azo compounds to the corresponding amines. The sequence is that of FMN-dependent NADH:quinone oxidoreductase from Sinorhizobium fredii (strain NBRC 101917 / NGR234).